We begin with the raw amino-acid sequence, 242 residues long: 3-deoxy-manno-octulosonate cytidylyltransferase (242 aa).

Belongs to the KdsB family.

It localises to the cytoplasm. It catalyses the reaction 3-deoxy-alpha-D-manno-oct-2-ulosonate + CTP = CMP-3-deoxy-beta-D-manno-octulosonate + diphosphate. It functions in the pathway nucleotide-sugar biosynthesis; CMP-3-deoxy-D-manno-octulosonate biosynthesis; CMP-3-deoxy-D-manno-octulosonate from 3-deoxy-D-manno-octulosonate and CTP: step 1/1. Its pathway is bacterial outer membrane biogenesis; lipopolysaccharide biosynthesis. Its function is as follows. Activates KDO (a required 8-carbon sugar) for incorporation into bacterial lipopolysaccharide in Gram-negative bacteria. This chain is 3-deoxy-manno-octulosonate cytidylyltransferase, found in Anaeromyxobacter dehalogenans (strain 2CP-C).